The following is a 967-amino-acid chain: Translation initiation factor IF-2 (967 aa).

Residues 34–363 (ASSTVEPPVA…APAVGGVSVP (330 aa)) are disordered. Composition is skewed to low complexity over residues 51 to 96 (PAGG…GNAA) and 103 to 154 (ASEA…TPGP). A compositionally biased stretch (gly residues) spans 184–196 (RSEGGAQRGGPRP). The span at 197–206 (GGQQRSGKPG) shows a compositional bias: low complexity. The segment covering 300–333 (PRRGGGPGGGPGGGGGFRGRGGRGGTQGAFGRGG) has biased composition (gly residues). The segment covering 334-345 (ARGKHRKSKRAK) has biased composition (basic residues). A tr-type G domain is found at 460-632 (PRPPVVTVMG…IVLTADGALE (173 aa)). The G1 stretch occupies residues 469-476 (GHVDHGKT). Position 469–476 (469–476 (GHVDHGKT)) interacts with GTP. The segment at 494–498 (GITQH) is G2. The G3 stretch occupies residues 519–522 (DTPG). GTP-binding positions include 519-523 (DTPGH) and 573-576 (NKVD). The interval 573–576 (NKVD) is G4. Positions 609–611 (SAR) are G5.

Belongs to the TRAFAC class translation factor GTPase superfamily. Classic translation factor GTPase family. IF-2 subfamily.

Its subcellular location is the cytoplasm. Functionally, one of the essential components for the initiation of protein synthesis. Protects formylmethionyl-tRNA from spontaneous hydrolysis and promotes its binding to the 30S ribosomal subunits. Also involved in the hydrolysis of GTP during the formation of the 70S ribosomal complex. In Kocuria rhizophila (strain ATCC 9341 / DSM 348 / NBRC 103217 / DC2201), this protein is Translation initiation factor IF-2.